Reading from the N-terminus, the 175-residue chain is 2-oxo-4-hydroxy-4-carboxy-5-ureidoimidazoline decarboxylase (175 aa).

His-67 serves as the catalytic Proton donor. Residues Pro-68, 84 to 88 (SQNEQ), and 119 to 123 (FVICA) contribute to the substrate site. The Microbody targeting signal signature appears at 173–175 (TKL).

This sequence belongs to the OHCU decarboxylase family.

The protein resides in the peroxisome. It catalyses the reaction 5-hydroxy-2-oxo-4-ureido-2,5-dihydro-1H-imidazole-5-carboxylate + H(+) = (S)-allantoin + CO2. It participates in purine metabolism; urate degradation; (S)-allantoin from urate: step 3/3. Its function is as follows. Catalyzes the stereoselective decarboxylation of 2-oxo-4-hydroxy-4-carboxy-5-ureidoimidazoline (OHCU) to (S)-allantoin. This Xenopus laevis (African clawed frog) protein is 2-oxo-4-hydroxy-4-carboxy-5-ureidoimidazoline decarboxylase (urad).